Reading from the N-terminus, the 358-residue chain is 4-hydroxy-3-methylbut-2-en-1-yl diphosphate synthase (flavodoxin) (358 aa).

The [4Fe-4S] cluster site is built by cysteine 264, cysteine 267, cysteine 299, and glutamate 306.

The protein belongs to the IspG family. [4Fe-4S] cluster serves as cofactor.

The catalysed reaction is (2E)-4-hydroxy-3-methylbut-2-enyl diphosphate + oxidized [flavodoxin] + H2O + 2 H(+) = 2-C-methyl-D-erythritol 2,4-cyclic diphosphate + reduced [flavodoxin]. Its pathway is isoprenoid biosynthesis; isopentenyl diphosphate biosynthesis via DXP pathway; isopentenyl diphosphate from 1-deoxy-D-xylulose 5-phosphate: step 5/6. Converts 2C-methyl-D-erythritol 2,4-cyclodiphosphate (ME-2,4cPP) into 1-hydroxy-2-methyl-2-(E)-butenyl 4-diphosphate. This chain is 4-hydroxy-3-methylbut-2-en-1-yl diphosphate synthase (flavodoxin), found in Helicobacter acinonychis (strain Sheeba).